The following is a 335-amino-acid chain: SLAM family member 7 (335 aa).

Residues 1-22 (MAGSPTCLTLIYILWQLTGSAA) form the signal peptide. One can recognise an Ig-like V-type domain in the interval 23–124 (SGPVKELVGS…PSTQEYVLHV (102 aa)). Over 23–226 (SGPVKELVGS…GAADDPDSSM (204 aa)) the chain is Extracellular. N-linked (GlcNAc...) asparagine glycosylation is found at N98, N142, N148, N172, N176, and N204. Residues 131–206 (PKVTMGLQSN…ARNPVSRNFS (76 aa)) enclose the Ig-like C2-type domain. Intrachain disulfides connect C145–C215 and C151–C195. Residues 227–247 (VLLCLLLVPLLLSLFVLGLFL) form a helical membrane-spanning segment. Topologically, residues 248 to 335 (WFLKRERQEE…PRLFAYENVI (88 aa)) are cytoplasmic. An interaction with FYN when phosphorylated at Tyr-284 region spans residues 278-296 (SGENTEYDTIPHTNRTILK). Positions 302 to 307 (TVYSTV) match the ITSM motif.

As to quaternary structure, isoform 1 binds to SH2D1A when its cytoplasmic tail is phosphorylated in the presence of FYN (in vitro); low affinity binding, the physiological relevance of the interaction is questioned. Interacts with SH2D1B; in NK cells. Interacts (via ITSM phosphorylated on Tyr-302) with SH2D1B, PTPN6/SHP-1, PTPN11/SHP-2, INPP5D/SHIP1, CSK and FYN. In terms of tissue distribution, expressed in spleen, lymph node, peripheral blood leukocytes, bone marrow, small intestine, stomach, appendix, lung and trachea. Expression was detected in NK cells, activated B-cells, NK-cell line but not in promyelocytic, B-, or T-cell lines. Expressed in monocytes. Isoform 3 is expressed at much lower level than isoform 1.

Its subcellular location is the membrane. Functionally, self-ligand receptor of the signaling lymphocytic activation molecule (SLAM) family. SLAM receptors triggered by homo- or heterotypic cell-cell interactions are modulating the activation and differentiation of a wide variety of immune cells and thus are involved in the regulation and interconnection of both innate and adaptive immune response. Activities are controlled by presence or absence of small cytoplasmic adapter proteins, SH2D1A/SAP and/or SH2D1B/EAT-2. Isoform 1 mediates NK cell activation through a SH2D1A-independent extracellular signal-regulated ERK-mediated pathway. Positively regulates NK cell functions by a mechanism dependent on phosphorylated SH2D1B. Downstream signaling implicates PLCG1, PLCG2 and PI3K. In addition to heterotypic NK cells-target cells interactions also homotypic interactions between NK cells may contribute to activation. However, in the absence of SH2D1B, inhibits NK cell function. Also acts inhibitory in T-cells. May play a role in lymphocyte adhesion. In LPS-activated monocytes negatively regulates production of pro-inflammatory cytokines. Its function is as follows. Isoform 3 does not mediate any NK cell activation. This is SLAM family member 7 (SLAMF7) from Homo sapiens (Human).